The chain runs to 372 residues: Putative 26S proteasome regulatory subunit homolog MTH_1011 (372 aa).

164 to 171 (GSPGTGKT) serves as a coordination point for ATP.

It belongs to the AAA ATPase family.

Functionally, the 26S proteasome is involved in the ATP-dependent degradation of ubiquitinated proteins. The regulatory (or ATPase) complex confers ATP dependency and substrate specificity to the 26S complex. The polypeptide is Putative 26S proteasome regulatory subunit homolog MTH_1011 (Methanothermobacter thermautotrophicus (strain ATCC 29096 / DSM 1053 / JCM 10044 / NBRC 100330 / Delta H) (Methanobacterium thermoautotrophicum)).